The primary structure comprises 248 residues: 2,3-bisphosphoglycerate-dependent phosphoglycerate mutase (248 aa).

Substrate is bound by residues 8–15 (RHGESVWN), 21–22 (TG), Arg60, 87–90 (ERHY), Lys98, and 114–115 (RR). The active-site Tele-phosphohistidine intermediate is the His9. The Proton donor/acceptor role is filled by Glu87. Residues 116-135 (SYDTPPPPMEVSDPRHPSHD) are disordered. Substrate is bound at residue 183-184 (GN).

The protein belongs to the phosphoglycerate mutase family. BPG-dependent PGAM subfamily. Homodimer.

It catalyses the reaction (2R)-2-phosphoglycerate = (2R)-3-phosphoglycerate. It functions in the pathway carbohydrate degradation; glycolysis; pyruvate from D-glyceraldehyde 3-phosphate: step 3/5. Its function is as follows. Catalyzes the interconversion of 2-phosphoglycerate and 3-phosphoglycerate. This is 2,3-bisphosphoglycerate-dependent phosphoglycerate mutase from Bdellovibrio bacteriovorus (strain ATCC 15356 / DSM 50701 / NCIMB 9529 / HD100).